We begin with the raw amino-acid sequence, 451 residues long: Tubulin beta chain (451 aa).

GTP contacts are provided by Q11, E69, S138, G142, T143, G144, N204, and N226. Residue E69 participates in Mg(2+) binding. The tract at residues 426 to 451 (QDATAEEEGEFDENEGAEGEEQPADY) is disordered. Positions 429–451 (TAEEEGEFDENEGAEGEEQPADY) are enriched in acidic residues.

It belongs to the tubulin family. As to quaternary structure, dimer of alpha and beta chains. A typical microtubule is a hollow water-filled tube with an outer diameter of 25 nm and an inner diameter of 15 nM. Alpha-beta heterodimers associate head-to-tail to form protofilaments running lengthwise along the microtubule wall with the beta-tubulin subunit facing the microtubule plus end conferring a structural polarity. Microtubules usually have 13 protofilaments but different protofilament numbers can be found in some organisms and specialized cells. Mg(2+) is required as a cofactor.

It localises to the cytoplasm. The protein resides in the cytoskeleton. Functionally, tubulin is the major constituent of microtubules, a cylinder consisting of laterally associated linear protofilaments composed of alpha- and beta-tubulin heterodimers. Microtubules grow by the addition of GTP-tubulin dimers to the microtubule end, where a stabilizing cap forms. Below the cap, tubulin dimers are in GDP-bound state, owing to GTPase activity of alpha-tubulin. This is Tubulin beta chain from Naegleria pringsheimi (Amoeba).